A 162-amino-acid polypeptide reads, in one-letter code: Large ribosomal subunit protein bL17 (162 aa).

The tract at residues 126–162 is disordered; it reads KKEEVKTKSRRGGKAKKAEPTTEAPANTTEETTDSAE. Residues 146 to 155 show a composition bias toward low complexity; it reads TTEAPANTTE.

The protein belongs to the bacterial ribosomal protein bL17 family. In terms of assembly, part of the 50S ribosomal subunit. Contacts protein L32.

This Flavobacterium psychrophilum (strain ATCC 49511 / DSM 21280 / CIP 103535 / JIP02/86) protein is Large ribosomal subunit protein bL17.